The chain runs to 725 residues: Glutamine-dependent NAD(+) synthetase (725 aa).

The CN hydrolase domain occupies 5–275; that stretch reads VTVATCALNQ…VEVLTATLDL (271 aa). The active-site Proton acceptor; for glutaminase activity is E45. Residue K114 is the For glutaminase activity of the active site. C175 acts as the Nucleophile; for glutaminase activity in catalysis. The tract at residues 325-706 is ligase; sequence YHRPEEEISL…KTSQTLEEQI (382 aa). ATP is bound at residue 355-362; sequence PLSGGVDS. The active site involves S357.

In the C-terminal section; belongs to the NAD synthetase family. As to quaternary structure, homohexamer.

It catalyses the reaction deamido-NAD(+) + L-glutamine + ATP + H2O = L-glutamate + AMP + diphosphate + NAD(+) + H(+). It functions in the pathway cofactor biosynthesis; NAD(+) biosynthesis; NAD(+) from deamido-NAD(+) (L-Gln route): step 1/1. Catalyzes the final step of the nicotinamide adenine dinucleotide (NAD) de novo synthesis pathway, the ATP-dependent amidation of deamido-NAD using L-glutamine as a nitrogen source. This is Glutamine-dependent NAD(+) synthetase (Nadsyn1) from Rattus norvegicus (Rat).